Consider the following 270-residue polypeptide: 3-methyl-2-oxobutanoate hydroxymethyltransferase (270 aa).

Residues Asp-41 and Asp-80 each contribute to the Mg(2+) site. 3-methyl-2-oxobutanoate contacts are provided by residues 41–42 (DS), Asp-80, and Lys-109. Glu-111 serves as a coordination point for Mg(2+). Residue Glu-178 is the Proton acceptor of the active site.

This sequence belongs to the PanB family. Homodecamer; pentamer of dimers. Mg(2+) serves as cofactor.

The protein resides in the cytoplasm. It carries out the reaction 3-methyl-2-oxobutanoate + (6R)-5,10-methylene-5,6,7,8-tetrahydrofolate + H2O = 2-dehydropantoate + (6S)-5,6,7,8-tetrahydrofolate. Its pathway is cofactor biosynthesis; (R)-pantothenate biosynthesis; (R)-pantoate from 3-methyl-2-oxobutanoate: step 1/2. Catalyzes the reversible reaction in which hydroxymethyl group from 5,10-methylenetetrahydrofolate is transferred onto alpha-ketoisovalerate to form ketopantoate. This chain is 3-methyl-2-oxobutanoate hydroxymethyltransferase, found in Thermotoga sp. (strain RQ2).